Consider the following 284-residue polypeptide: 4-diphosphocytidyl-2-C-methyl-D-erythritol kinase (284 aa).

Residue lysine 14 is part of the active site. Residue 98–108 participates in ATP binding; the sequence is PMGGGLGGGSS. The active site involves aspartate 140.

The protein belongs to the GHMP kinase family. IspE subfamily.

It carries out the reaction 4-CDP-2-C-methyl-D-erythritol + ATP = 4-CDP-2-C-methyl-D-erythritol 2-phosphate + ADP + H(+). It functions in the pathway isoprenoid biosynthesis; isopentenyl diphosphate biosynthesis via DXP pathway; isopentenyl diphosphate from 1-deoxy-D-xylulose 5-phosphate: step 3/6. Its function is as follows. Catalyzes the phosphorylation of the position 2 hydroxy group of 4-diphosphocytidyl-2C-methyl-D-erythritol. This is 4-diphosphocytidyl-2-C-methyl-D-erythritol kinase from Shewanella halifaxensis (strain HAW-EB4).